Consider the following 147-residue polypeptide: Cytochrome c oxidase subunit 3 (147 aa).

Helical transmembrane passes span 13 to 33, 48 to 68, 83 to 103, and 125 to 145; these read FQIP…VTWA, GLFI…YEYF, FFMA…FLLI, and AWYW…IYWW.

The protein belongs to the cytochrome c oxidase subunit 3 family. As to quaternary structure, component of the cytochrome c oxidase (complex IV, CIV), a multisubunit enzyme composed of a catalytic core of 3 subunits and several supernumerary subunits. The complex exists as a monomer or a dimer and forms supercomplexes (SCs) in the inner mitochondrial membrane with ubiquinol-cytochrome c oxidoreductase (cytochrome b-c1 complex, complex III, CIII).

It is found in the mitochondrion inner membrane. It carries out the reaction 4 Fe(II)-[cytochrome c] + O2 + 8 H(+)(in) = 4 Fe(III)-[cytochrome c] + 2 H2O + 4 H(+)(out). In terms of biological role, component of the cytochrome c oxidase, the last enzyme in the mitochondrial electron transport chain which drives oxidative phosphorylation. The respiratory chain contains 3 multisubunit complexes succinate dehydrogenase (complex II, CII), ubiquinol-cytochrome c oxidoreductase (cytochrome b-c1 complex, complex III, CIII) and cytochrome c oxidase (complex IV, CIV), that cooperate to transfer electrons derived from NADH and succinate to molecular oxygen, creating an electrochemical gradient over the inner membrane that drives transmembrane transport and the ATP synthase. Cytochrome c oxidase is the component of the respiratory chain that catalyzes the reduction of oxygen to water. Electrons originating from reduced cytochrome c in the intermembrane space (IMS) are transferred via the dinuclear copper A center (CU(A)) of subunit 2 and heme A of subunit 1 to the active site in subunit 1, a binuclear center (BNC) formed by heme A3 and copper B (CU(B)). The BNC reduces molecular oxygen to 2 water molecules using 4 electrons from cytochrome c in the IMS and 4 protons from the mitochondrial matrix. This chain is Cytochrome c oxidase subunit 3 (COIII), found in Spodoptera frugiperda (Fall armyworm).